The sequence spans 443 residues: Phosphoglucosamine mutase (443 aa).

The active-site Phosphoserine intermediate is the Ser-100. Mg(2+) is bound by residues Ser-100, Asp-239, Asp-241, and Asp-243. At Ser-100 the chain carries Phosphoserine.

The protein belongs to the phosphohexose mutase family. It depends on Mg(2+) as a cofactor. Post-translationally, activated by phosphorylation.

It catalyses the reaction alpha-D-glucosamine 1-phosphate = D-glucosamine 6-phosphate. Its function is as follows. Catalyzes the conversion of glucosamine-6-phosphate to glucosamine-1-phosphate. The polypeptide is Phosphoglucosamine mutase (Shewanella sediminis (strain HAW-EB3)).